The following is a 401-amino-acid chain: MSVCSSDLSYSSRVCLPGSCDSCSDSWQVDDCPESCCEPPCCAPSCCAPAPCLSLVCTPVSRVSSPCCPVTCEPSPCQSGCTSSCTPSCCQQSSCQLACCASSPCQQACCVPVCCKTVCCKPVCCVPVCCGDSSCCQQSSCQSACCTSSPCQQACCVPICCKPVCSGISSSCCQQSSCVSCVSSPCCQAVCEPSPCQSGCISSCTPSCCQQSSCQPACCTSSSCQQACCVPVCCKTVCCKPVCSEDSSSCCQQSSCQPACCTSSPCQQACCVPVCCKPVCCKPVCSVPICSGASSLCCQQSSCQPACCTSSQSQQGCCVPVCCKPVSCVPVCSGASSSCCQQSSCQPACCTTSCCRPSSSVSLLCRPVCRPACCVPVPSCCAPTSSCQPSCCRPASCVSLL.

35 tandem repeats follow at residues 36 to 40, 41 to 45, 46 to 50, 67 to 71, 89 to 93, 99 to 103, 109 to 113, 114 to 118, 119 to 123, 124 to 128, 129 to 133, 135 to 139, 145 to 149, 155 to 159, 160 to 164, 172 to 176, 186 to 190, 208 to 212, 218 to 222, 228 to 232, 233 to 237, 238 to 242, 250 to 254, 270 to 274, 275 to 279, 280 to 284, 297 to 301, 307 to 311, 317 to 321, 322 to 326, 339 to 343, 349 to 353, 354 to 358, 373 to 377, and 391 to 395. The tract at residues 36 to 395 is 36 X 5 AA repeats of C-C-X(3); sequence CCEPPCCAPS…SCQPSCCRPA (360 aa).

The protein belongs to the KRTAP type 10 family. Interacts with hair keratins. Restricted to hair root, not detected in any other tissues.

Functionally, in the hair cortex, hair keratin intermediate filaments are embedded in an interfilamentous matrix, consisting of hair keratin-associated proteins (KRTAP), which are essential for the formation of a rigid and resistant hair shaft through their extensive disulfide bond cross-linking with abundant cysteine residues of hair keratins. The matrix proteins include the high-sulfur and high-glycine-tyrosine keratins. This Homo sapiens (Human) protein is Keratin-associated protein 10-4 (KRTAP10-4).